A 115-amino-acid chain; its full sequence is NADH-ubiquinone oxidoreductase chain 3 (115 aa).

Helical transmembrane passes span 4–24, 55–75, and 84–104; these read ALTL…AFWL, FFLV…LLPL, and LTTM…SLAY.

It belongs to the complex I subunit 3 family. Core subunit of respiratory chain NADH dehydrogenase (Complex I) which is composed of 45 different subunits. Interacts with TMEM186. Interacts with TMEM242.

The protein resides in the mitochondrion inner membrane. The enzyme catalyses a ubiquinone + NADH + 5 H(+)(in) = a ubiquinol + NAD(+) + 4 H(+)(out). In terms of biological role, core subunit of the mitochondrial membrane respiratory chain NADH dehydrogenase (Complex I) which catalyzes electron transfer from NADH through the respiratory chain, using ubiquinone as an electron acceptor. Essential for the catalytic activity of complex I. This chain is NADH-ubiquinone oxidoreductase chain 3, found in Phoca vitulina (Harbor seal).